We begin with the raw amino-acid sequence, 734 residues long: Photosystem I P700 chlorophyll a apoprotein A2 (734 aa).

The next 8 helical transmembrane spans lie at 46 to 69 (IFASHFGQLAVIFLWTSGNLFHVA), 135 to 158 (LYTGALFLLALSALFLIAGWLHLQ), 175 to 199 (LNHHLSGLFGVSSLAWTGHLVHVAI), 273 to 291 (IAHHHLAIAVVFIIAGHMY), 330 to 353 (LHFQLGLALAALGVITSLVAQHMY), 369 to 395 (AALYTHHQYIAGFIMTGAFAHGAIFFI), 417 to 439 (AIISHLSWASLFLGFHTLGLYVH), and 517 to 535 (FLVHHAIALGLHTTTSIPV). The [4Fe-4S] cluster site is built by cysteine 559 and cysteine 568. The next 2 helical transmembrane spans lie at 575 to 596 (AFYLSVFWMLNTIGWVTFYWHW) and 643 to 665 (LSVWAWMFLFGHLVWAIGFMFLI). 3 residues coordinate chlorophyll a: histidine 654, methionine 662, and tyrosine 670. Tryptophan 671 contributes to the phylloquinone binding site. The helical transmembrane segment at 707–727 (LVGLAHFSVGYIFTYAAFLIA) threads the bilayer.

Belongs to the PsaA/PsaB family. As to quaternary structure, the PsaA/B heterodimer binds the P700 chlorophyll special pair and subsequent electron acceptors. PSI consists of a core antenna complex that captures photons, and an electron transfer chain that converts photonic excitation into a charge separation. The eukaryotic PSI reaction center is composed of at least 11 subunits. It depends on P700 is a chlorophyll a/chlorophyll a' dimer, A0 is one or more chlorophyll a, A1 is one or both phylloquinones and FX is a shared 4Fe-4S iron-sulfur center. as a cofactor.

The protein localises to the plastid. It is found in the chloroplast thylakoid membrane. The catalysed reaction is reduced [plastocyanin] + hnu + oxidized [2Fe-2S]-[ferredoxin] = oxidized [plastocyanin] + reduced [2Fe-2S]-[ferredoxin]. In terms of biological role, psaA and PsaB bind P700, the primary electron donor of photosystem I (PSI), as well as the electron acceptors A0, A1 and FX. PSI is a plastocyanin-ferredoxin oxidoreductase, converting photonic excitation into a charge separation, which transfers an electron from the donor P700 chlorophyll pair to the spectroscopically characterized acceptors A0, A1, FX, FA and FB in turn. Oxidized P700 is reduced on the lumenal side of the thylakoid membrane by plastocyanin. This Angiopteris evecta (Mule's foot fern) protein is Photosystem I P700 chlorophyll a apoprotein A2.